A 770-amino-acid chain; its full sequence is Probable copper-exporting P-type ATPase V (770 aa).

Positions 1–66 (MRVCVTGFNV…AITKAQHVPA (66 aa)) constitute an HMA domain. Positions 103–130 (DKPLKASRCGGRPRGPVRGSASWPGEQN) are disordered. A compositionally biased stretch (low complexity) spans 110-121 (RCGGRPRGPVRG). 6 consecutive transmembrane segments (helical) span residues 141–161 (VWLALPLGLLALGSSMFFGAY), 164–184 (AGWLAFAATLPVQFVAGWPIL), 193–213 (ALTSNMDTLIALGTLTAFVYS), 217–237 (LFAGGPLFFDTSALIIAFVVL), 377–397 (AVFVPAVIGVAVATFAGWTLI), and 402–422 (VAGMTAAVAVLIIACPCALGL). Residue aspartate 460 is the 4-aspartylphosphate intermediate of the active site. Aspartate 660 and aspartate 664 together coordinate Mg(2+). 2 helical membrane passes run 718 to 737 (LGWAFGYNTAAIPLAALGAL) and 741 to 760 (VAGAAMGFSSVSVVTNSLRL).

This sequence belongs to the cation transport ATPase (P-type) (TC 3.A.3) family. Type IB subfamily.

The protein localises to the cell membrane. It catalyses the reaction Cu(+)(in) + ATP + H2O = Cu(+)(out) + ADP + phosphate + H(+). Necessary for copper homeostasis and likely functions as a copper exporter. Also required for full virulence. This is Probable copper-exporting P-type ATPase V (ctpV) from Mycobacterium tuberculosis (strain CDC 1551 / Oshkosh).